Consider the following 342-residue polypeptide: 3-isopropylmalate dehydrogenase (342 aa).

Positions 87, 97, 121, and 212 each coordinate substrate. Residues aspartate 212, aspartate 236, and aspartate 240 each coordinate Mg(2+). 272 to 284 (GSAPDIAGRQLAD) lines the NAD(+) pocket. Positions 319-328 (RAAAGAAQPS) are enriched in low complexity. A disordered region spans residues 319–342 (RAAAGAAQPSTRERGEDLAARAAG). Over residues 329 to 342 (TRERGEDLAARAAG) the composition is skewed to basic and acidic residues.

It belongs to the isocitrate and isopropylmalate dehydrogenases family. LeuB type 2 subfamily. In terms of assembly, homodimer. Requires Mg(2+) as cofactor. Mn(2+) serves as cofactor.

It localises to the cytoplasm. It catalyses the reaction (2R,3S)-3-isopropylmalate + NAD(+) = 4-methyl-2-oxopentanoate + CO2 + NADH. The protein operates within amino-acid biosynthesis; L-leucine biosynthesis; L-leucine from 3-methyl-2-oxobutanoate: step 3/4. Its function is as follows. Catalyzes the oxidation of 3-carboxy-2-hydroxy-4-methylpentanoate (3-isopropylmalate) to 3-carboxy-4-methyl-2-oxopentanoate. The product decarboxylates to 4-methyl-2 oxopentanoate. The polypeptide is 3-isopropylmalate dehydrogenase (Frankia casuarinae (strain DSM 45818 / CECT 9043 / HFP020203 / CcI3)).